Consider the following 1108-residue polypeptide: Activity-dependent neuroprotector homeobox protein (1108 aa).

The segment at 1 to 685 (MFQLPVNNLG…ASTITLHLVH (685 aa)) is binds to beta-catenin/CTNNB1. Residues lysine 39 and lysine 72 each participate in a glycyl lysine isopeptide (Lys-Gly) (interchain with G-Cter in SUMO2) cross-link. The C2H2-type 1; degenerate zinc finger occupies 74-97 (FCCSACPFSSKFFSAYKSHFRNVH). Phosphoserine is present on serine 98. The C2H2-type 2; degenerate zinc-finger motif lies at 107-129 (LNCPYCTFNADKKTLETHIKIFH). Residues 133 to 154 (SSAPSSSLSTFKDKNKNDGLKP) are disordered. Basic and acidic residues predominate over residues 143-154 (FKDKNKNDGLKP). Residues lysine 144 and lysine 155 each participate in a glycyl lysine isopeptide (Lys-Gly) (interchain with G-Cter in SUMO2) cross-link. The C2H2-type 3; degenerate zinc finger occupies 165–188 (YYCKKCTYRDPLYEIVRKHIYREH). Glycyl lysine isopeptide (Lys-Gly) (interchain with G-Cter in SUMO2) cross-links involve residues lysine 203, lysine 231, lysine 266, lysine 274, lysine 278, lysine 279, lysine 311, and lysine 335. The segment at 221–244 (IHCKRCLFMPKSYEALVQHVIEDH) adopts a C2H2-type 4; degenerate zinc-finger fold. The residue at position 348 (arginine 348) is an Asymmetric dimethylarginine. A neuroprotective peptide; contributes to CTNNB1-binding, but less effective than whole N-terminal region region spans residues 354–361 (NAPVSIPQ). Residues 360 to 438 (PQQSQSVKQL…PAATGPPPSN (79 aa)) are disordered. Glycyl lysine isopeptide (Lys-Gly) (interchain with G-Cter in SUMO2) cross-links involve residues lysine 367 and lysine 407. Residues 393-422 (SLQTANTSLPPGQVKSPSVSQSQASRVLGQ) show a composition bias toward polar residues. A phosphoserine mark is found at serine 408 and serine 412. Residue lysine 426 forms a Glycyl lysine isopeptide (Lys-Gly) (interchain with G-Cter in SUMO2) linkage. Residues 426–437 (KPPPAATGPPPS) are compositionally biased toward pro residues. The C2H2-type 5; atypical zinc-finger motif lies at 446–468 (KICTICNELFPENVYSVHFEKEH). C2H2-type zinc fingers lie at residues 488–509 (SKCLYCNRYLPTDTLLNHMLIH) and 511–534 (LSCPYCRSTFNDVEKMAAHMRMVH). Residues lysine 599 and lysine 605 each participate in a glycyl lysine isopeptide (Lys-Gly) (interchain with G-Cter in SUMO2) cross-link. Position 607 is a phosphoserine (serine 607). Residues lysine 615, lysine 620, lysine 631, and lysine 657 each participate in a glycyl lysine isopeptide (Lys-Gly) (interchain with G-Cter in SUMO2) cross-link. The C2H2-type 8; atypical zinc-finger motif lies at 621–646 (TLCPLCFSILKGPISDALAHHLRERH). The segment at 661–685 (YKCIHCLGVYTSNMTASTITLHLVH) adopts a C2H2-type 9; atypical zinc-finger fold. Residues 690-711 (GKTQNGQDKTNAPSRLNQSPGL) are disordered. The segment covering 691 to 709 (KTQNGQDKTNAPSRLNQSP) has biased composition (polar residues). Lysine 698 participates in a covalent cross-link: Glycyl lysine isopeptide (Lys-Gly) (interchain with G-Cter in SUMO2). The residue at position 708 (serine 708) is a Phosphoserine. Glycyl lysine isopeptide (Lys-Gly) (interchain with G-Cter in SUMO2) cross-links involve residues lysine 715, lysine 727, and lysine 730. Serine 737 carries the post-translational modification Phosphoserine. Lysine 744 is covalently cross-linked (Glycyl lysine isopeptide (Lys-Gly) (interchain with G-Cter in SUMO2)). Positions 753–813 (LDPKGHEDDS…SNKRKKCVRD (61 aa)) form a DNA-binding region, homeobox. Serine 804 carries the phosphoserine modification. Residues lysine 806, lysine 828, and lysine 834 each participate in a glycyl lysine isopeptide (Lys-Gly) (interchain with G-Cter in SUMO2) cross-link. Residues 851-880 (KDSRVNASKTVDKKHNLGKEDDSFSDSFEH) show a composition bias toward basic and acidic residues. Residues 851-1037 (KDSRVNASKT…DTEQLKWKNS (187 aa)) form a disordered region. A phosphoserine mark is found at serine 875, serine 877, serine 885, serine 888, and serine 904. Glycyl lysine isopeptide (Lys-Gly) (interchain with G-Cter in SUMO2) cross-links involve residues lysine 913, lysine 928, and lysine 941. Acidic residues predominate over residues 928 to 938 (KEEEEEEEEED). The segment covering 939–959 (GSKYETIHLTEEPAKLMHDAS) has biased composition (basic and acidic residues). 2 positions are modified to phosphoserine: serine 959 and serine 961. Over residues 977 to 988 (PSESGPGSQQIS) the composition is skewed to polar residues. Lysine 1022 participates in a covalent cross-link: Glycyl lysine isopeptide (Lys-Gly) (interchain with G-Cter in SUMO2). 2 positions are modified to N6-acetyllysine; alternate: lysine 1041 and lysine 1048. Glycyl lysine isopeptide (Lys-Gly) (interchain with G-Cter in SUMO2); alternate cross-links involve residues lysine 1041 and lysine 1048. The tract at residues 1050-1108 (QSQWENASENAERLPNPQIEWQNSTIDSEDGEQFDSMTDGVADPMHGSLTGVKLSSQQA) is disordered. Residue serine 1077 is modified to Phosphoserine.

As to quaternary structure, interacts (via N-terminal region) with beta-catenin/CTNNB1 (via the central armadillo domains); interaction is direct and stabilizes CTNNB1 by modulating its phosphorylation by glycogen synthase kinase-3 beta GSK3B. Expressed in the brain, with a higher expression in cerebellum and hippocampus. Weakly expressed in lung, kidney and intestine, and expressed at intermediate level in testis.

It localises to the nucleus. The protein localises to the chromosome. In terms of biological role, may be involved in transcriptional regulation. May mediate some of the neuroprotective peptide VIP-associated effects involving normal growth and cancer proliferation. Positively modulates WNT-beta-catenin/CTNN1B signaling, acting by regulating phosphorylation of, and thereby stabilizing, CTNNB1. May be required for neural induction and neuronal differentiation. May be involved in erythroid differentiation. The sequence is that of Activity-dependent neuroprotector homeobox protein (Adnp) from Mus musculus (Mouse).